The following is a 231-amino-acid chain: Ion-translocating oxidoreductase complex subunit E (231 aa).

Helical transmembrane passes span Ala-18 to Ala-38, Leu-39 to Leu-59, Thr-63 to Val-83, Leu-86 to Val-106, Ala-125 to Leu-145, and Pro-182 to Gly-202.

It belongs to the NqrDE/RnfAE family. As to quaternary structure, the complex is composed of six subunits: RsxA, RsxB, RsxC, RsxD, RsxE and RsxG.

Its subcellular location is the cell inner membrane. Part of a membrane-bound complex that couples electron transfer with translocation of ions across the membrane. Required to maintain the reduced state of SoxR. In Escherichia coli (strain SMS-3-5 / SECEC), this protein is Ion-translocating oxidoreductase complex subunit E.